We begin with the raw amino-acid sequence, 156 residues long: Transcription antitermination protein NusB (156 aa).

This sequence belongs to the NusB family.

Functionally, involved in transcription antitermination. Required for transcription of ribosomal RNA (rRNA) genes. Binds specifically to the boxA antiterminator sequence of the ribosomal RNA (rrn) operons. In Xanthomonas oryzae pv. oryzae (strain MAFF 311018), this protein is Transcription antitermination protein NusB.